A 147-amino-acid polypeptide reads, in one-letter code: uncharacterized protein (147 aa).

Residues 13 to 35 (NSRINLLGILVLNVVCGKSSIFF) form a helical membrane-spanning segment.

The protein localises to the membrane. This is an uncharacterized protein from Saccharomyces cerevisiae (strain ATCC 204508 / S288c) (Baker's yeast).